A 335-amino-acid chain; its full sequence is Methionine import ATP-binding protein MetN 2 (335 aa).

Residues 2–242 (IEFHDVHKTY…PQHPTTRRFV (241 aa)) enclose the ABC transporter domain. 38–45 (GHSGAGKS) lines the ATP pocket.

It belongs to the ABC transporter superfamily. Methionine importer (TC 3.A.1.24) family. In terms of assembly, the complex is composed of two ATP-binding proteins (MetN), two transmembrane proteins (MetI) and a solute-binding protein (MetQ).

The protein localises to the cell inner membrane. The catalysed reaction is L-methionine(out) + ATP + H2O = L-methionine(in) + ADP + phosphate + H(+). It catalyses the reaction D-methionine(out) + ATP + H2O = D-methionine(in) + ADP + phosphate + H(+). In terms of biological role, part of the ABC transporter complex MetNIQ involved in methionine import. Responsible for energy coupling to the transport system. This chain is Methionine import ATP-binding protein MetN 2, found in Pseudomonas aeruginosa (strain UCBPP-PA14).